Here is a 762-residue protein sequence, read N- to C-terminus: Phospholipase D alpha 4 (762 aa).

Positions 1 to 116 constitute a C2 domain; sequence MELEEQKKYF…VINGFFPLIA (116 aa). Aspartate 172 serves as a coordination point for Ca(2+). Residues 301–339 form the PLD phosphodiesterase 1 domain; that stretch reads TAFAHHQKTITLDTRVTNSSTKEREIMSFLGGFDLCDGR. Catalysis depends on residues histidine 306, lysine 308, and aspartate 313. Histidine 306 serves as a coordination point for a 1,2-diacyl-sn-glycero-3-phosphate. Ca(2+)-binding residues include histidine 345 and histidine 377. Positions 477 and 615 each coordinate a 1,2-diacyl-sn-glycero-3-phosphate. The 28-residue stretch at 610–637 folds into the PLD phosphodiesterase 2 domain; that stretch reads FMVYVHSKLMIVDDTYILIGSANINQRS. Catalysis depends on residues histidine 615, lysine 617, and aspartate 622. Glutamate 671 is a binding site for Ca(2+).

The protein belongs to the phospholipase D family. C2-PLD subfamily. Requires Ca(2+) as cofactor. In terms of tissue distribution, expressed in roots, leaves, stems, siliques,flowers and inflorescences.

It is found in the cell membrane. It catalyses the reaction a 1,2-diacyl-sn-glycero-3-phosphocholine + H2O = a 1,2-diacyl-sn-glycero-3-phosphate + choline + H(+). Functionally, hydrolyzes glycerol-phospholipids at the terminal phosphodiesteric bond to generate phosphatidic acids (PA). Promotes growth and plays a role in nitrogen signaling. The protein is Phospholipase D alpha 4 of Arabidopsis thaliana (Mouse-ear cress).